The sequence spans 154 residues: Small ribosomal subunit protein bS16 (154 aa).

Over residues 111-121 (AAAGLAEAPTK) the composition is skewed to low complexity. The interval 111–154 (AAAGLAEAPTKPAKKAAKAEAAPKTDEAAPKTEEQAGAGSGEQG) is disordered. Over residues 127–144 (AKAEAAPKTDEAAPKTEE) the composition is skewed to basic and acidic residues.

This sequence belongs to the bacterial ribosomal protein bS16 family.

This Salinispora tropica (strain ATCC BAA-916 / DSM 44818 / JCM 13857 / NBRC 105044 / CNB-440) protein is Small ribosomal subunit protein bS16.